The primary structure comprises 529 residues: Autophagy-related protein 21 (529 aa).

Polar residues predominate over residues 49–62; the sequence is NSLEDSAGCQNPTH. The segment at 49–70 is disordered; sequence NSLEDSAGCQNPTHSKTDSQDT. WD repeat units lie at residues 271–311 and 321–361; these read AHHS…GKVK and GHNL…SDIC. The short motif at 318-322 is the L/FRRG motif element; that stretch reads LRRGH. The interval 362–388 is disordered; the sequence is TNENSEDRTNHNSDYEDSDGDTSKSSE. The span at 366–375 shows a compositional bias: basic and acidic residues; it reads SEDRTNHNSD.

The protein belongs to the WD repeat PROPPIN family.

The protein resides in the cytoplasm. It is found in the membrane. Its subcellular location is the vacuole membrane. Its function is as follows. Required for cytoplasm to vacuole transport (Cvt) vesicles formation and mitophagy. Involved in binding of phosphatidylethanolamine to ATG8 and in recruitment of ATG8 and ATG5 to the pre-autophagosomal structure. Protects ATG8 from ARG4-mediated cleavage. This chain is Autophagy-related protein 21 (ATG21), found in Candida albicans (strain SC5314 / ATCC MYA-2876) (Yeast).